The chain runs to 313 residues: Formimidoylglutamase (313 aa).

Mn(2+) contacts are provided by His130, Asp155, His157, Asp159, Asp241, and Asp243.

It belongs to the arginase family. Mn(2+) serves as cofactor.

The catalysed reaction is N-formimidoyl-L-glutamate + H2O = formamide + L-glutamate. Its pathway is amino-acid degradation; L-histidine degradation into L-glutamate; L-glutamate from N-formimidoyl-L-glutamate (hydrolase route): step 1/1. In terms of biological role, catalyzes the conversion of N-formimidoyl-L-glutamate to L-glutamate and formamide. This Salmonella enteritidis PT4 (strain P125109) protein is Formimidoylglutamase.